Here is a 404-residue protein sequence, read N- to C-terminus: CD209 antigen (404 aa).

Residues 1–37 lie on the Cytoplasmic side of the membrane; the sequence is MSDSKEPRLQQLGLLEEEQLRGLGFRQTRGYKSLAGC. 3 short sequence motifs (endocytosis signal) span residues 14-15, 16-18, and 31-34; these read LL, EEE, and YKSL. A helical; Signal-anchor for type II membrane protein membrane pass occupies residues 38-58; the sequence is LGHGPLVLQLLSFTLLAGLLV. Residues 59 to 404 lie on the Extracellular side of the membrane; that stretch reads QVSKVPSSIS…APATPNPPPA (346 aa). N-linked (GlcNAc...) asparagine glycosylation occurs at Asn-80. 7 consecutive repeat copies span residues 96 to 118, 119 to 141, 142 to 164, 165 to 187, 188 to 210, 211 to 233, and 234 to 257. Residues 96–257 form a 7 X approximate tandem repeats region; that stretch reads KLQEIYQELT…AVERLCHPCP (162 aa). 3 disulfide bridges follow: Cys-256–Cys-267, Cys-284–Cys-377, and Cys-356–Cys-369. A C-type lectin domain is found at 263-378; sequence FQGNCYFMSN…CNLAKFWICK (116 aa). Residues Glu-347, Asn-349, Val-351, Glu-354, Asn-365, and Asp-366 each contribute to the Ca(2+) site.

As to quaternary structure, homotetramer. Interacts with C1QBP; the interaction is indicative for a C1q:C1QBP:CD209 signaling complex. Interacts with ICAM2 and ICAM3 by binding to mannose-like carbohydrates. Interacts (via C-type lectin domain) with CEACAM1 (via Lewis X moieties); this interaction is regulated by the glycosylation pattern of CEACAM1 on cell types and regulates contact between dendritic cells and neutrophils. In terms of assembly, (Microbial infection) Interacts with HIV-1 and HIV-2 gp120. (Microbial infection) Interacts with ebolavirus envelope glycoproteins. As to quaternary structure, (Microbial infection) Interacts with cytomegalovirus gB protein. In terms of assembly, (Microbial infection) Interacts with HCV E2 protein. (Microbial infection) Interacts with dengue virus major envelope protein E. As to quaternary structure, (Microbial infection) Interacts with measles hemagglutinin. In terms of assembly, (Microbial infection) Interacts with herpes simplex virus 1 surface proteins. (Microbial infection) Interacts with Influenzavirus A hemagglutinin. As to quaternary structure, (Microbial infection) Interacts with SARS-CoV spike glycoprotein. In terms of assembly, (Microbial infection) Interacts with Japanese encephalitis virus E protein. (Microbial infection) Interacts with Lassa virus Glycoprotein. As to quaternary structure, (Microbial infection) Interacts with marburg virus glycoprotein. In terms of assembly, (Microbial infection) Interacts with Respiratory syncytial virus glycoprotein G. (Microbial infection) Interacts with Rift valley fever virus and uukuniemi virus envelope glycoprotein. As to quaternary structure, (Microbial infection) Interacts with west-nile virus envelope glycoprotein. In terms of assembly, (Microbial infection) Interacts with whole M.bovis cells in a Ca(2+)-dependent and independent manner; in vitro experiments suggest it interacts with CH60.1 (groL1), DnaK, GADPH (gap) and LrpG. In terms of tissue distribution, predominantly expressed in dendritic cells and in DC-residing tissues. Also found in placental macrophages, endothelial cells of placental vascular channels, peripheral blood mononuclear cells, and THP-1 monocytes.

It is found in the cell membrane. It localises to the secreted. Pathogen-recognition receptor expressed on the surface of immature dendritic cells (DCs) and involved in initiation of primary immune response. Thought to mediate the endocytosis of pathogens which are subsequently degraded in lysosomal compartments. The receptor returns to the cell membrane surface and the pathogen-derived antigens are presented to resting T-cells via MHC class II proteins to initiate the adaptive immune response. In terms of biological role, on DCs it is a high affinity receptor for ICAM2 and ICAM3 by binding to mannose-like carbohydrates. May act as a DC rolling receptor that mediates transendothelial migration of DC presursors from blood to tissues by binding endothelial ICAM2. Seems to regulate DC-induced T-cell proliferation by binding to ICAM3 on T-cells in the immunological synapse formed between DC and T-cells. Its function is as follows. (Microbial infection) Acts as an attachment receptor for HIV-1 and HIV-2. Functionally, (Microbial infection) Acts as an attachment receptor for Ebolavirus. (Microbial infection) Acts as an attachment receptor for Cytomegalovirus. In terms of biological role, (Microbial infection) Acts as an attachment receptor for HCV. Its function is as follows. (Microbial infection) Acts as an attachment receptor for Dengue virus. Functionally, (Microbial infection) Acts as an attachment receptor for Measles virus. (Microbial infection) Acts as an attachment receptor for Herpes simplex virus 1. In terms of biological role, (Microbial infection) Acts as an attachment receptor for Influenzavirus A. Its function is as follows. (Microbial infection) Acts as an attachment receptor for SARS-CoV. Functionally, (Microbial infection) Acts as an attachment receptor for Japanese encephalitis virus. (Microbial infection) Acts as an attachment receptor for Lassa virus. Acts as an attachment receptor for Marburg virusn. In terms of biological role, (Microbial infection) Acts as an attachment receptor for Respiratory syncytial virus. Its function is as follows. (Microbial infection) Acts as an attachment receptor for Rift valley fever virus and uukuniemi virus. Functionally, (Microbial infection) Acts as an attachment receptor for West-nile virus. (Microbial infection) Probably recognizes in a calcium-dependent manner high mannose N-linked oligosaccharides in a variety of bacterial pathogen antigens, including Leishmania pifanoi LPG, Lewis-x antigen in Helicobacter pylori LPS, mannose in Klebsiella pneumonae LPS, di-mannose and tri-mannose in Mycobacterium tuberculosis ManLAM and Lewis-x antigen in Schistosoma mansoni SEA. Recognition of M.tuberculosis by dendritic cells occurs partially via this molecule. The chain is CD209 antigen (CD209) from Homo sapiens (Human).